Here is a 104-residue protein sequence, read N- to C-terminus: Large ribosomal subunit protein uL24 (104 aa).

It belongs to the universal ribosomal protein uL24 family. Part of the 50S ribosomal subunit.

One of two assembly initiator proteins, it binds directly to the 5'-end of the 23S rRNA, where it nucleates assembly of the 50S subunit. Its function is as follows. One of the proteins that surrounds the polypeptide exit tunnel on the outside of the subunit. This chain is Large ribosomal subunit protein uL24, found in Halothermothrix orenii (strain H 168 / OCM 544 / DSM 9562).